The sequence spans 54 residues: Large ribosomal subunit protein bL32c (54 aa).

The protein belongs to the bacterial ribosomal protein bL32 family.

It is found in the plastid. The protein resides in the chloroplast. This chain is Large ribosomal subunit protein bL32c, found in Lactuca sativa (Garden lettuce).